Here is a 568-residue protein sequence, read N- to C-terminus: Chaperonin homolog Hsp-60, mitochondrial (568 aa).

Belongs to the chaperonin (HSP60) family.

The protein resides in the mitochondrion matrix. Functionally, implicated in mitochondrial protein import and macromolecular assembly. May facilitate the correct folding of imported proteins. May also prevent misfolding and promote the refolding and proper assembly of unfolded polypeptides generated under stress conditions in the mitochondrial matrix. This Caenorhabditis elegans protein is Chaperonin homolog Hsp-60, mitochondrial (hsp-60).